A 397-amino-acid polypeptide reads, in one-letter code: CCA-adding enzyme (397 aa).

2 residues coordinate ATP: G26 and R29. The CTP site is built by G26 and R29. The Mg(2+) site is built by D39 and D41. The ATP site is built by R110, D153, R156, R159, and R162. CTP-binding residues include R110, D153, R156, R159, and R162.

Belongs to the tRNA nucleotidyltransferase/poly(A) polymerase family. Bacterial CCA-adding enzyme type 3 subfamily. As to quaternary structure, homodimer. It depends on Mg(2+) as a cofactor.

It carries out the reaction a tRNA precursor + 2 CTP + ATP = a tRNA with a 3' CCA end + 3 diphosphate. The enzyme catalyses a tRNA with a 3' CCA end + 2 CTP + ATP = a tRNA with a 3' CCACCA end + 3 diphosphate. In terms of biological role, catalyzes the addition and repair of the essential 3'-terminal CCA sequence in tRNAs without using a nucleic acid template. Adds these three nucleotides in the order of C, C, and A to the tRNA nucleotide-73, using CTP and ATP as substrates and producing inorganic pyrophosphate. tRNA 3'-terminal CCA addition is required both for tRNA processing and repair. Also involved in tRNA surveillance by mediating tandem CCA addition to generate a CCACCA at the 3' terminus of unstable tRNAs. While stable tRNAs receive only 3'-terminal CCA, unstable tRNAs are marked with CCACCA and rapidly degraded. The protein is CCA-adding enzyme of Bacillus cereus (strain ATCC 10987 / NRS 248).